Here is a 383-residue protein sequence, read N- to C-terminus: Spermidine/putrescine import ATP-binding protein PotA (383 aa).

Residues 12-246 form the ABC transporter domain; that stretch reads IALRDISKVY…PSTPFVAGFI (235 aa). 48–55 is a binding site for ATP; it reads GPSGCGKT.

The protein belongs to the ABC transporter superfamily. Spermidine/putrescine importer (TC 3.A.1.11.1) family. As to quaternary structure, the complex is composed of two ATP-binding proteins (PotA), two transmembrane proteins (PotB and PotC) and a solute-binding protein (PotD).

It is found in the cell membrane. The enzyme catalyses ATP + H2O + polyamine-[polyamine-binding protein]Side 1 = ADP + phosphate + polyamineSide 2 + [polyamine-binding protein]Side 1.. In terms of biological role, part of the ABC transporter complex PotABCD involved in spermidine/putrescine import. Responsible for energy coupling to the transport system. This Acidothermus cellulolyticus (strain ATCC 43068 / DSM 8971 / 11B) protein is Spermidine/putrescine import ATP-binding protein PotA.